The primary structure comprises 648 residues: Threonine--tRNA ligase (648 aa).

Residues 1–63 (MAQISLTFPD…HADATIAIHT (63 aa)) enclose the TGS domain. The interval 247 to 544 (DHRKLGREMD…LIENSAGKLP (298 aa)) is catalytic. Cys344, His395, and His521 together coordinate Zn(2+).

This sequence belongs to the class-II aminoacyl-tRNA synthetase family. In terms of assembly, homodimer. Zn(2+) serves as cofactor.

Its subcellular location is the cytoplasm. The catalysed reaction is tRNA(Thr) + L-threonine + ATP = L-threonyl-tRNA(Thr) + AMP + diphosphate + H(+). Its function is as follows. Catalyzes the attachment of threonine to tRNA(Thr) in a two-step reaction: L-threonine is first activated by ATP to form Thr-AMP and then transferred to the acceptor end of tRNA(Thr). Also edits incorrectly charged L-seryl-tRNA(Thr). This Roseobacter denitrificans (strain ATCC 33942 / OCh 114) (Erythrobacter sp. (strain OCh 114)) protein is Threonine--tRNA ligase.